A 415-amino-acid chain; its full sequence is MSILENFDPAVAHAIRVETERQEFNLELIASENFVSEAVMEAQGSVLTNKYAEGYPGKRYYGGCHNVDIVENLAIDRAKELFGAEHANVQPHSGSQANMAVYFTVLKPGDTVLGMNLAHGGHLTHGSPVNFSGKFFNIVPYGVTKESQTIDYAEVERLAVEHKPKMIVVGASAYPRTIDFAAFRKIADKVGAVVMVDMAHIAGLVAAGLHPSPVPHAEFVTTTTHKTLRGPRGGMILCREEFAKALNSNIFPGIQGGPLMHVIAAKAVAFKEALSPEFKQYQQQIVNNAKALAVALMKNGFKLTSGGTDNHLMLVDLSETPLTGKVAEEALDKAGITVNKNGIPFDTRSPFITSGIRIGTPAATTHGLKEPEMAQVAGFIADALANVDNDAKLAEIKGRVNTMMKQFPLYSSRLA.

Residues Leu-117 and 121-123 (GHL) each bind (6S)-5,6,7,8-tetrahydrofolate. The residue at position 226 (Lys-226) is an N6-(pyridoxal phosphate)lysine. (6S)-5,6,7,8-tetrahydrofolate-binding positions include Glu-241 and 349-351 (SPF).

It belongs to the SHMT family. As to quaternary structure, homodimer. Pyridoxal 5'-phosphate is required as a cofactor.

The protein localises to the cytoplasm. It carries out the reaction (6R)-5,10-methylene-5,6,7,8-tetrahydrofolate + glycine + H2O = (6S)-5,6,7,8-tetrahydrofolate + L-serine. It functions in the pathway one-carbon metabolism; tetrahydrofolate interconversion. Its pathway is amino-acid biosynthesis; glycine biosynthesis; glycine from L-serine: step 1/1. Catalyzes the reversible interconversion of serine and glycine with tetrahydrofolate (THF) serving as the one-carbon carrier. This reaction serves as the major source of one-carbon groups required for the biosynthesis of purines, thymidylate, methionine, and other important biomolecules. Also exhibits THF-independent aldolase activity toward beta-hydroxyamino acids, producing glycine and aldehydes, via a retro-aldol mechanism. In Geotalea daltonii (strain DSM 22248 / JCM 15807 / FRC-32) (Geobacter daltonii), this protein is Serine hydroxymethyltransferase.